The chain runs to 197 residues: Putative NADH dehydrogenase/NAD(P)H nitroreductase Plav_3612 (197 aa).

This sequence belongs to the nitroreductase family. HadB/RutE subfamily. Requires FMN as cofactor.

This Parvibaculum lavamentivorans (strain DS-1 / DSM 13023 / NCIMB 13966) protein is Putative NADH dehydrogenase/NAD(P)H nitroreductase Plav_3612.